Consider the following 480-residue polypeptide: Uridine 5'-monophosphate synthase (480 aa).

Alanine 2 carries the N-acetylalanine modification. Residues 2 to 214 form an OPRTase region; it reads AAVGAALGPL…VFVAANHNGS (213 aa). The residue at position 37 (tyrosine 37) is a Phosphotyrosine. A Phosphoserine modification is found at serine 214. The domain linker stretch occupies residues 215–220; sequence PLSIKE. The tract at residues 221 to 480 is OMPdecase; that stretch reads APKELSFSAR…WEAYLSRLGV (260 aa). Serine 257 lines the orotidine 5'-phosphate pocket. Residues serine 257, aspartate 259, and 281–283 contribute to the UMP site; that span reads KTH. Orotidine 5'-phosphate contacts are provided by residues lysine 281, lysine 314, aspartate 317, threonine 321, serine 372, 430–432, and 450–451; these read QQY and GR. Catalysis depends on for OMPdecase activity residues lysine 314 and aspartate 317. UMP is bound by residues aspartate 317, threonine 321, serine 372, 430–432, and 450–451; these read QQY and GR.

The protein in the N-terminal section; belongs to the purine/pyrimidine phosphoribosyltransferase family. This sequence in the C-terminal section; belongs to the OMP decarboxylase family. In terms of assembly, homodimer; dimerization is required for enzymatic activity.

It carries out the reaction orotidine 5'-phosphate + diphosphate = orotate + 5-phospho-alpha-D-ribose 1-diphosphate. It catalyses the reaction orotidine 5'-phosphate + H(+) = UMP + CO2. It functions in the pathway pyrimidine metabolism; UMP biosynthesis via de novo pathway; UMP from orotate: step 1/2. It participates in pyrimidine metabolism; UMP biosynthesis via de novo pathway; UMP from orotate: step 2/2. Bifunctional enzyme catalyzing the last two steps of de novo pyrimidine biosynthesis, orotate phosphoribosyltransferase (OPRT), which converts orotate to orotidine-5'-monophosphate (OMP), and orotidine-5'-monophosphate decarboxylase (ODC), the terminal enzymatic reaction that decarboxylates OMP to uridine monophosphate (UMP). The chain is Uridine 5'-monophosphate synthase (UMPS) from Pongo abelii (Sumatran orangutan).